A 418-amino-acid polypeptide reads, in one-letter code: Enolase 1 (418 aa).

Q162 contacts (2R)-2-phosphoglycerate. The active-site Proton donor is the E204. Mg(2+)-binding residues include D241, E285, and D312. K337, R366, S367, and K388 together coordinate (2R)-2-phosphoglycerate. K337 serves as the catalytic Proton acceptor.

Belongs to the enolase family. It depends on Mg(2+) as a cofactor.

It localises to the cytoplasm. It is found in the secreted. Its subcellular location is the cell surface. It carries out the reaction (2R)-2-phosphoglycerate = phosphoenolpyruvate + H2O. It functions in the pathway carbohydrate degradation; glycolysis; pyruvate from D-glyceraldehyde 3-phosphate: step 4/5. In terms of biological role, catalyzes the reversible conversion of 2-phosphoglycerate (2-PG) into phosphoenolpyruvate (PEP). It is essential for the degradation of carbohydrates via glycolysis. This is Enolase 1 from Lactococcus lactis subsp. cremoris (strain SK11).